The sequence spans 422 residues: UDP-N-acetylglucosamine 1-carboxyvinyltransferase (422 aa).

22-23 (KN) contacts phosphoenolpyruvate. Arg94 is a UDP-N-acetyl-alpha-D-glucosamine binding site. Residue Cys118 is the Proton donor of the active site. Position 118 is a 2-(S-cysteinyl)pyruvic acid O-phosphothioketal (Cys118). UDP-N-acetyl-alpha-D-glucosamine-binding positions include 123-127 (RPVDL), Asp309, and Ile331.

It belongs to the EPSP synthase family. MurA subfamily.

It localises to the cytoplasm. It catalyses the reaction phosphoenolpyruvate + UDP-N-acetyl-alpha-D-glucosamine = UDP-N-acetyl-3-O-(1-carboxyvinyl)-alpha-D-glucosamine + phosphate. It participates in cell wall biogenesis; peptidoglycan biosynthesis. Functionally, cell wall formation. Adds enolpyruvyl to UDP-N-acetylglucosamine. In Cereibacter sphaeroides (strain ATCC 17025 / ATH 2.4.3) (Rhodobacter sphaeroides), this protein is UDP-N-acetylglucosamine 1-carboxyvinyltransferase.